Consider the following 144-residue polypeptide: Large ribosomal subunit protein uL15 (144 aa).

The segment at 1–52 is disordered; sequence MRLNTLSPAAGSKPSKKRVGRGIGSGLGKTGGRGHKGQKSRSGGKVRAGFEG. Over residues 21–31 the composition is skewed to gly residues; the sequence is RGIGSGLGKTG. Basic residues predominate over residues 32 to 44; the sequence is GRGHKGQKSRSGG.

It belongs to the universal ribosomal protein uL15 family. As to quaternary structure, part of the 50S ribosomal subunit.

In terms of biological role, binds to the 23S rRNA. The protein is Large ribosomal subunit protein uL15 of Aliivibrio fischeri (strain ATCC 700601 / ES114) (Vibrio fischeri).